The primary structure comprises 138 residues: MIKSKGDVNILLNFRHNINGEDLIIAVAQDHETGEVLMVAYMNREALRRTLETGTAHYWSTSRGKLWLKGESSGHVQRVKDVLVDCDGDAVVLKVEQEGGACHTGYRSCFYRSIDGDELKVREDAVKVFDPEEIYGDG.

D85 is a Mg(2+) binding site. C86 contributes to the Zn(2+) binding site. Residues D87 and D89 each coordinate Mg(2+). Zn(2+) is bound by residues C102 and C109.

The protein belongs to the PRA-CH family. As to quaternary structure, homodimer. It depends on Mg(2+) as a cofactor. The cofactor is Zn(2+).

It localises to the cytoplasm. The catalysed reaction is 1-(5-phospho-beta-D-ribosyl)-5'-AMP + H2O = 1-(5-phospho-beta-D-ribosyl)-5-[(5-phospho-beta-D-ribosylamino)methylideneamino]imidazole-4-carboxamide. Its pathway is amino-acid biosynthesis; L-histidine biosynthesis; L-histidine from 5-phospho-alpha-D-ribose 1-diphosphate: step 3/9. Catalyzes the hydrolysis of the adenine ring of phosphoribosyl-AMP. This Methanothermobacter thermautotrophicus (strain ATCC 29096 / DSM 1053 / JCM 10044 / NBRC 100330 / Delta H) (Methanobacterium thermoautotrophicum) protein is Phosphoribosyl-AMP cyclohydrolase.